A 430-amino-acid polypeptide reads, in one-letter code: Tol-Pal system protein TolB (430 aa).

The N-terminal stretch at 1–21 (MKQALRVAVSFFMLWAAVLHA) is a signal peptide.

Belongs to the TolB family. The Tol-Pal system is composed of five core proteins: the inner membrane proteins TolA, TolQ and TolR, the periplasmic protein TolB and the outer membrane protein Pal. They form a network linking the inner and outer membranes and the peptidoglycan layer.

Its subcellular location is the periplasm. Functionally, part of the Tol-Pal system, which plays a role in outer membrane invagination during cell division and is important for maintaining outer membrane integrity. TolB occupies a key intermediary position in the Tol-Pal system because it communicates directly with both membrane-embedded components, Pal in the outer membrane and TolA in the inner membrane. In Enterobacter sp. (strain 638), this protein is Tol-Pal system protein TolB.